The chain runs to 180 residues: GTP cyclohydrolase 1 (180 aa).

Residues C71, H74, and C142 each contribute to the Zn(2+) site.

The protein belongs to the GTP cyclohydrolase I family. Homomer.

The enzyme catalyses GTP + H2O = 7,8-dihydroneopterin 3'-triphosphate + formate + H(+). It participates in cofactor biosynthesis; 7,8-dihydroneopterin triphosphate biosynthesis; 7,8-dihydroneopterin triphosphate from GTP: step 1/1. The polypeptide is GTP cyclohydrolase 1 (Helicobacter pylori (strain Shi470)).